Here is a 551-residue protein sequence, read N- to C-terminus: Glucans biosynthesis protein D (551 aa).

The tat-type signal signal peptide spans 1-32 (MNRRRFIKASLALAAACGTPGLATLFSRNAWA).

It belongs to the OpgD/OpgG family. Post-translationally, predicted to be exported by the Tat system. The position of the signal peptide cleavage has not been experimentally proven.

It is found in the periplasm. It participates in glycan metabolism; osmoregulated periplasmic glucan (OPG) biosynthesis. Functionally, probably involved in the control of the structural glucose backbone of osmoregulated periplasmic glucans (OPGs). The sequence is that of Glucans biosynthesis protein D from Cronobacter sakazakii (strain ATCC BAA-894) (Enterobacter sakazakii).